The chain runs to 734 residues: Photosystem I P700 chlorophyll a apoprotein A2 (734 aa).

8 helical membrane passes run I46 to A69, L135 to Q158, L175 to I199, M273 to Y291, L330 to Y353, A369 to I395, A417 to H439, and F517 to V535. [4Fe-4S] cluster contacts are provided by C559 and C568. 2 consecutive transmembrane segments (helical) span residues A575–W596 and L643–I665. Positions 654, 662, and 670 each coordinate chlorophyll a. Position 671 (W671) interacts with phylloquinone. A helical transmembrane segment spans residues L707–A727.

This sequence belongs to the PsaA/PsaB family. The PsaA/B heterodimer binds the P700 chlorophyll special pair and subsequent electron acceptors. PSI consists of a core antenna complex that captures photons, and an electron transfer chain that converts photonic excitation into a charge separation. The eukaryotic PSI reaction center is composed of at least 11 subunits. P700 is a chlorophyll a/chlorophyll a' dimer, A0 is one or more chlorophyll a, A1 is one or both phylloquinones and FX is a shared 4Fe-4S iron-sulfur center. serves as cofactor.

The protein resides in the plastid. The protein localises to the chloroplast thylakoid membrane. It catalyses the reaction reduced [plastocyanin] + hnu + oxidized [2Fe-2S]-[ferredoxin] = oxidized [plastocyanin] + reduced [2Fe-2S]-[ferredoxin]. In terms of biological role, psaA and PsaB bind P700, the primary electron donor of photosystem I (PSI), as well as the electron acceptors A0, A1 and FX. PSI is a plastocyanin-ferredoxin oxidoreductase, converting photonic excitation into a charge separation, which transfers an electron from the donor P700 chlorophyll pair to the spectroscopically characterized acceptors A0, A1, FX, FA and FB in turn. Oxidized P700 is reduced on the lumenal side of the thylakoid membrane by plastocyanin. The chain is Photosystem I P700 chlorophyll a apoprotein A2 from Acorus calamus (Sweet flag).